The primary structure comprises 105 residues: Cortistatin (105 aa).

The first 18 residues, 1 to 18 (MPLSPGLLLLLLSGATAT), serve as a signal peptide directing secretion. Positions 19 to 74 (AALPLEGGPTGRDSEHMQEAAGIRKSSLLTFLAWWFEWTSQASAGPLIGEEAREVA) are excised as a propeptide. C93 and C104 are disulfide-bonded.

The protein belongs to the somatostatin family. Expressed in a subset of GABAergic cells in the cortex and hippocampus.

It localises to the secreted. Its function is as follows. Binds to all human somatostatin receptor (SSTR) subtypes. It also inhibits cAMP production induced by forskolin through SSTRs. This is Cortistatin (CORT) from Homo sapiens (Human).